The following is a 61-amino-acid chain: Large ribosomal subunit protein bL32 (61 aa).

It belongs to the bacterial ribosomal protein bL32 family.

This chain is Large ribosomal subunit protein bL32, found in Cytophaga hutchinsonii (strain ATCC 33406 / DSM 1761 / CIP 103989 / NBRC 15051 / NCIMB 9469 / D465).